Reading from the N-terminus, the 109-residue chain is Thiosulfate sulfurtransferase GlpE (109 aa).

The Rhodanese domain occupies 17–105 (KEGKTALVDI…WARSYPQDIT (89 aa)). Cys-65 acts as the Cysteine persulfide intermediate in catalysis.

It belongs to the GlpE family.

It localises to the cytoplasm. It carries out the reaction thiosulfate + hydrogen cyanide = thiocyanate + sulfite + 2 H(+). It catalyses the reaction thiosulfate + [thioredoxin]-dithiol = [thioredoxin]-disulfide + hydrogen sulfide + sulfite + 2 H(+). In terms of biological role, transferase that catalyzes the transfer of sulfur from thiosulfate to thiophilic acceptors such as cyanide or dithiols. May function in a CysM-independent thiosulfate assimilation pathway by catalyzing the conversion of thiosulfate to sulfite, which can then be used for L-cysteine biosynthesis. This is Thiosulfate sulfurtransferase GlpE from Yersinia pestis bv. Antiqua (strain Antiqua).